We begin with the raw amino-acid sequence, 655 residues long: p-hydroxybenzoic acid efflux pump subunit AaeB (655 aa).

11 helical membrane passes run 13 to 33 (FAVKLATAIVLALFVGFHFQL), 38 to 58 (WAVLTAAIVAAGPAFAAGGEP), 69 to 89 (LRIIGTFIGCIAGLVIIIAMI), 93 to 113 (LLMILVCCIWAGFCTWISSLV), 121 to 141 (WGLAGYTALIIVITIQPEPLL), 152 to 172 (EIVIGIVCAIMADLLFSPRSI), 370 to 390 (LFWLWTGWTSGSGAMVMIAVV), 407 to 427 (FIYGTLAALPLGLLYFLVIIP), 431 to 451 (QSMLLLCISLAVLGFFLGIEV), 459 to 479 (MGALASTINIIVLDNPMTFHF), and 482 to 502 (FLDSALGQIVGCVLAFTVILL).

This sequence belongs to the aromatic acid exporter ArAE (TC 2.A.85) family.

It localises to the cell inner membrane. Functionally, forms an efflux pump with AaeA. Could function as a metabolic relief valve, allowing to eliminate certain compounds when they accumulate to high levels in the cell. The protein is p-hydroxybenzoic acid efflux pump subunit AaeB of Escherichia coli O7:K1 (strain IAI39 / ExPEC).